Consider the following 372-residue polypeptide: Spermidine/putrescine import ATP-binding protein PotA (372 aa).

Residues Val-12–Ile-250 form the ABC transporter domain. Position 48–55 (Gly-48–Thr-55) interacts with ATP.

It belongs to the ABC transporter superfamily. Spermidine/putrescine importer (TC 3.A.1.11.1) family. In terms of assembly, the complex is composed of two ATP-binding proteins (PotA), two transmembrane proteins (PotB and PotC) and a solute-binding protein (PotD).

The protein localises to the cell inner membrane. It carries out the reaction ATP + H2O + polyamine-[polyamine-binding protein]Side 1 = ADP + phosphate + polyamineSide 2 + [polyamine-binding protein]Side 1.. Its function is as follows. Part of the ABC transporter complex PotABCD involved in spermidine/putrescine import. Responsible for energy coupling to the transport system. The chain is Spermidine/putrescine import ATP-binding protein PotA from Pseudomonas fluorescens (strain ATCC BAA-477 / NRRL B-23932 / Pf-5).